Here is a 301-residue protein sequence, read N- to C-terminus: Nucleotide-binding protein ELI_02120 (301 aa).

Residue 12-19 coordinates ATP; the sequence is GMSGAGKS. 62–65 provides a ligand contact to GTP; the sequence is DSRT.

The protein belongs to the RapZ-like family.

Its function is as follows. Displays ATPase and GTPase activities. The chain is Nucleotide-binding protein ELI_02120 from Erythrobacter litoralis (strain HTCC2594).